The following is a 490-amino-acid chain: Hippocampus abundant transcript 1 protein (490 aa).

Met-1 is modified (N-acetylmethionine). Residues 1–40 (MTQGKKKKRAANRSIMLAKKIIIKDGGTPQGIGSPSVYHA) are Extracellular-facing. The N-linked (GlcNAc...) asparagine glycan is linked to Asn-12. A helical membrane pass occupies residues 41–61 (VIVIFLEFFAWGLLTAPTLVV). At 62–74 (LHETFPKHTFLMN) the chain is on the cytoplasmic side. The helical transmembrane segment at 75–95 (GLIQGVKGLLSFLSAPLIGAL) threads the bilayer. Over 96–103 (SDVWGRKS) the chain is Extracellular. The chain crosses the membrane as a helical span at residues 104–124 (FLLLTVFFTCAPIPLMKISPW). Topologically, residues 125–126 (WY) are cytoplasmic. The helical transmembrane segment at 127–147 (FAVISVSGVFAVTFSVVFAYV) threads the bilayer. The Extracellular portion of the chain corresponds to 148-160 (ADITQEHERSMAY). The helical transmembrane segment at 161 to 181 (GLVSATFAASLVTSPAIGAYL) threads the bilayer. Residues 182–188 (GRVYGDS) lie on the Cytoplasmic side of the membrane. A helical transmembrane segment spans residues 189–209 (LVVVLATAIALLDICFILVAV). Residues 210–243 (PESLPEKMRPASWGAPISWEQADPFASLKKVGQD) are Extracellular-facing. The chain crosses the membrane as a helical span at residues 244 to 264 (SIVLLICITVFLSYLPEAGQY). At 265-284 (SSFFLYLRQIMKFSPESVAA) the chain is on the cytoplasmic side. The chain crosses the membrane as a helical span at residues 285 to 305 (FIAVLGILSIIAQTIVLSLLM). The Extracellular segment spans residues 306-313 (RSIGNKNT). The chain crosses the membrane as a helical span at residues 314–334 (ILLGLGFQILQLAWYGFGSEP). Topologically, residues 335 to 337 (WMM) are cytoplasmic. The helical transmembrane segment at 338 to 358 (WAAGAVAAMSSITFPAVSALV) threads the bilayer. Over 359 to 379 (SRTADADQQGVVQGMITGIRG) the chain is Extracellular. A helical transmembrane segment spans residues 380-400 (LCNGLGPALYGFIFYIFHVEL). Over 401–427 (KELPITGTDLGTNTSPQHHFEQNSIIP) the chain is Cytoplasmic. A helical transmembrane segment spans residues 428-448 (GPPFLFGACSVLLALLVALFI). Over 449 to 490 (PEHTNLSLRSSSWRKHCGSHSHPHSTQAPGEAKEPLLQDTNV) the chain is Extracellular. Asn-453 carries an N-linked (GlcNAc...) asparagine glycan. Positions 466-490 (GSHSHPHSTQAPGEAKEPLLQDTNV) are disordered.

The protein belongs to the major facilitator superfamily. Expressed in various tissues.

Its subcellular location is the membrane. This Mus musculus (Mouse) protein is Hippocampus abundant transcript 1 protein.